A 920-amino-acid chain; its full sequence is WD repeat-containing protein 47 (920 aa).

The 33-residue stretch at 10–42 folds into the LisH domain; sequence KEVEIIKLILDFLNSKKLHISMLALEKESGVIN. The 58-residue stretch at 45-102 folds into the CTLH domain; the sequence is FSDDMLFLRQLILDGQWDEVLQFIQPLECMEKFDKKRFRYIILKQKFLEALCVNNAMS. Thr-285 is modified (phosphothreonine). A phosphoserine mark is found at Ser-289, Ser-292, Ser-297, and Ser-312. Positions 371 to 380 are enriched in basic and acidic residues; it reads YEESPERSDT. Residues 371 to 422 are disordered; the sequence is YEESPERSDTPVEAQQPVSSEAMCQGSGLEKEPANGAQNPVPAKQEKNELRD. Phosphoserine is present on Ser-423. Residues 501–594 are disordered; that stretch reads LNQQCSGSKN…RSKGEEDDKS (94 aa). A compositionally biased stretch (low complexity) spans 506–523; that stretch reads SGSKNNGSNNSSVTSFST. The segment covering 538-552 has biased composition (polar residues); it reads NIHTSTPRNPGSTNH. Thr-543 carries the phosphothreonine modification. 7 WD repeats span residues 605 to 644, 660 to 699, 707 to 749, 754 to 792, 799 to 838, 841 to 880, and 887 to 919; these read EDTQ…DASA, HHKG…CNAT, MHDG…GQGL, GHTG…CVRV, GTGS…MVQS, PHSS…TKQL, and EHKD…WTYS.

As to quaternary structure, interacts with MAP1S (via WD repeats). In terms of tissue distribution, enriched in the nervous system (at protein level).

The protein resides in the cytoplasm. The protein localises to the cytoskeleton. The polypeptide is WD repeat-containing protein 47 (Wdr47) (Mus musculus (Mouse)).